The following is a 472-amino-acid chain: UDP-N-acetylmuramate--L-alanine ligase (472 aa).

An ATP-binding site is contributed by 118 to 124 (GTHGKTT).

It belongs to the MurCDEF family.

It localises to the cytoplasm. The catalysed reaction is UDP-N-acetyl-alpha-D-muramate + L-alanine + ATP = UDP-N-acetyl-alpha-D-muramoyl-L-alanine + ADP + phosphate + H(+). Its pathway is cell wall biogenesis; peptidoglycan biosynthesis. Cell wall formation. The sequence is that of UDP-N-acetylmuramate--L-alanine ligase from Methylococcus capsulatus (strain ATCC 33009 / NCIMB 11132 / Bath).